A 219-amino-acid chain; its full sequence is Adenylate kinase (219 aa).

10-15 serves as a coordination point for ATP; it reads GAGKGT. Residues 30–59 are NMP; that stretch reads STGDMLRAAIREGTELGLKAKSVMESGGLV. AMP is bound by residues Thr-31, Arg-36, 57-59, 85-88, and Gln-92; these read GLV and GFPR. The tract at residues 122–159 is LID; the sequence is GRRQHPASGRVYHIEYNPPKVEGKDDVTGEELVQRPDD. ATP is bound by residues Arg-123 and 132–133; that span reads VY. AMP is bound by residues Arg-156 and Arg-167. ATP is bound at residue Arg-202.

The protein belongs to the adenylate kinase family. As to quaternary structure, monomer.

The protein localises to the cytoplasm. The catalysed reaction is AMP + ATP = 2 ADP. Its pathway is purine metabolism; AMP biosynthesis via salvage pathway; AMP from ADP: step 1/1. Catalyzes the reversible transfer of the terminal phosphate group between ATP and AMP. Plays an important role in cellular energy homeostasis and in adenine nucleotide metabolism. The chain is Adenylate kinase from Acinetobacter baylyi (strain ATCC 33305 / BD413 / ADP1).